A 569-amino-acid polypeptide reads, in one-letter code: Urease subunit alpha (569 aa).

Positions 131–569 (GSIDTHIHFI…VPMAQRYFLL (439 aa)) constitute a Urease domain. Ni(2+) is bound by residues His136, His138, and Lys219. Lys219 is subject to N6-carboxylysine. His221 provides a ligand contact to substrate. His248 and His274 together coordinate Ni(2+). The Proton donor role is filled by His322. A Ni(2+)-binding site is contributed by Asp362.

This sequence belongs to the metallo-dependent hydrolases superfamily. Urease alpha subunit family. Heterotrimer of UreA (gamma), UreB (beta) and UreC (alpha) subunits. Three heterotrimers associate to form the active enzyme. Requires Ni cation as cofactor. Carboxylation allows a single lysine to coordinate two nickel ions.

It is found in the cytoplasm. It carries out the reaction urea + 2 H2O + H(+) = hydrogencarbonate + 2 NH4(+). Its pathway is nitrogen metabolism; urea degradation; CO(2) and NH(3) from urea (urease route): step 1/1. This Prochlorococcus marinus (strain MIT 9301) protein is Urease subunit alpha.